Here is a 255-residue protein sequence, read N- to C-terminus: 5-oxoprolinase subunit A (255 aa).

Belongs to the LamB/PxpA family. Forms a complex composed of PxpA, PxpB and PxpC.

It catalyses the reaction 5-oxo-L-proline + ATP + 2 H2O = L-glutamate + ADP + phosphate + H(+). In terms of biological role, catalyzes the cleavage of 5-oxoproline to form L-glutamate coupled to the hydrolysis of ATP to ADP and inorganic phosphate. This Pyrococcus abyssi (strain GE5 / Orsay) protein is 5-oxoprolinase subunit A.